The primary structure comprises 621 residues: GPI-anchor transamidase component GPAA1 (621 aa).

Over 1-19 (MGLLSDPVRRRALARIVLR) the chain is Cytoplasmic. The helical transmembrane segment at 20–41 (LNTPLCVLSYVAGIAWFLALAF) threads the bilayer. Residues 42-370 (PPLTQRTYMS…LLPALSRFVS (329 aa)) lie on the Lumenal side of the membrane. A 2-acyl-6-[6-phosphoethanolamine-alpha-D-mannosyl-(1-&gt;2)-6-phosphoethanolamine-alpha-D-mannosyl-(1-&gt;6)-2-phosphoethanolamine-alpha-D-mannosyl-(1-&gt;4)-alpha-D-glucosaminyl]-1-(1-radyl,2-acyl-sn-glycero-3-phospho)-1D-myo-inositol contacts are provided by Y49 and S51. N-linked (GlcNAc...) asparagine glycosylation is present at N203. Cysteines 259 and 266 form a disulfide. Residues H354, Q355, and S356 each contribute to the a 2-acyl-6-[6-phosphoethanolamine-alpha-D-mannosyl-(1-&gt;2)-6-phosphoethanolamine-alpha-D-mannosyl-(1-&gt;6)-2-phosphoethanolamine-alpha-D-mannosyl-(1-&gt;4)-alpha-D-glucosaminyl]-1-(1-radyl,2-acyl-sn-glycero-3-phospho)-1D-myo-inositol site. Q355 is a Mg(2+) binding site. The chain crosses the membrane as a helical span at residues 371–393 (IGLYMPATGFLLLVLGLKALELW). The Cytoplasmic portion of the chain corresponds to 394–425 (MQLHQAGVNPEEAGKAPSPGTPLLPTQGVGLA). Residues 426–450 (SLTAPLLISQAMGLALYFLPVLGQH) form a helical membrane-spanning segment. Over 451-462 (LATQHFPVAEAE) the chain is Lumenal. The chain crosses the membrane as a helical span at residues 463–483 (AVVLTLLAIYVAGLALPHNTH). Over 484 to 495 (RVVNSQVPDRGW) the chain is Cytoplasmic. 2 helical membrane passes run 496–519 (MALK…LNFS) and 520–536 (LGFL…ALAK). At 537–540 (PHGP) the chain is on the cytoplasmic side. The chain crosses the membrane as a helical span at residues 541-563 (RTLYAALLVVTSPAVTLFGSLFL). Over 564–597 (WRELLEVPLSLAEGWQLFLTALAQGVLEHYTYGA) the chain is Lumenal. A helical transmembrane segment spans residues 598 to 619 (LLFPILALGLYPCWLLFWNVLF). Topologically, residues 620 to 621 (WK) are cytoplasmic.

In terms of assembly, heteropentamer. Part of the GPI-anchor transamidase complex, consisting of PIGK, PIGT, PIGS, PIGU and GAA1. Interacts with PIGK. Ubiquitously expressed in fetal and adult tissues. Expressed at higher levels in fetal tissues than adult tissues. In embryos abundant in the choroid plexus, skeletal muscle,.

The protein localises to the endoplasmic reticulum membrane. It functions in the pathway glycolipid biosynthesis; glycosylphosphatidylinositol-anchor biosynthesis. Functionally, component of the glycosylphosphatidylinositol-anchor (GPI-anchor) transamidase (GPI-T) complex that catalyzes the formation of the linkage between a proprotein and a GPI-anchor and participates in GPI anchored protein biosynthesis. Binds GPI-anchor. The polypeptide is GPI-anchor transamidase component GPAA1 (Mus musculus (Mouse)).